The sequence spans 321 residues: Probable membrane-associated kinase regulator 3 (321 aa).

Polar residues predominate over residues 297–314; sequence KSNVTESELCSSRTSVST. Residues 297 to 321 are disordered; that stretch reads KSNVTESELCSSRTSVSTCGDLDKD.

Its subcellular location is the cell membrane. The sequence is that of Probable membrane-associated kinase regulator 3 (MAKR3) from Arabidopsis thaliana (Mouse-ear cress).